The sequence spans 313 residues: Methionyl-tRNA formyltransferase (313 aa).

Position 113-116 (113-116) interacts with (6S)-5,6,7,8-tetrahydrofolate; it reads SLLP.

This sequence belongs to the Fmt family.

The catalysed reaction is L-methionyl-tRNA(fMet) + (6R)-10-formyltetrahydrofolate = N-formyl-L-methionyl-tRNA(fMet) + (6S)-5,6,7,8-tetrahydrofolate + H(+). In terms of biological role, attaches a formyl group to the free amino group of methionyl-tRNA(fMet). The formyl group appears to play a dual role in the initiator identity of N-formylmethionyl-tRNA by promoting its recognition by IF2 and preventing the misappropriation of this tRNA by the elongation apparatus. The sequence is that of Methionyl-tRNA formyltransferase from Acidithiobacillus ferrooxidans (strain ATCC 23270 / DSM 14882 / CIP 104768 / NCIMB 8455) (Ferrobacillus ferrooxidans (strain ATCC 23270)).